The primary structure comprises 258 residues: Small ribosomal subunit protein uS2 (258 aa).

Positions 226 to 258 (AQNKDVEPVADKDEKPEAAPVDEAETATETTGE) are disordered. The span at 229–242 (KDVEPVADKDEKPE) shows a compositional bias: basic and acidic residues. Residues 245-258 (PVDEAETATETTGE) are compositionally biased toward acidic residues.

The protein belongs to the universal ribosomal protein uS2 family.

The protein is Small ribosomal subunit protein uS2 of Solidesulfovibrio magneticus (strain ATCC 700980 / DSM 13731 / RS-1) (Desulfovibrio magneticus).